The chain runs to 425 residues: Histidine--tRNA ligase 2 (425 aa).

It belongs to the class-II aminoacyl-tRNA synthetase family. Homodimer.

It localises to the cytoplasm. The enzyme catalyses tRNA(His) + L-histidine + ATP = L-histidyl-tRNA(His) + AMP + diphosphate + H(+). The sequence is that of Histidine--tRNA ligase 2 from Shouchella clausii (strain KSM-K16) (Alkalihalobacillus clausii).